The following is a 573-amino-acid chain: Protein DSE1 (573 aa).

WD repeat units lie at residues 144–185 (DFPP…GCAK), 315–351 (RKNTSLDCVWISNHHVAQSLNDKIQIWDIQSCDGKPV), 356–395 (AKKGYIESLKFNENTGALYSSDDQGFVICWDLQNLQNMKY), and 397–448 (ELVH…NGKG). The segment covering 500–509 (SDSSMLSLSN) has biased composition (low complexity). Residues 500-519 (SDSSMLSLSNESDHSMTETS) form a disordered region. K553 participates in a covalent cross-link: Glycyl lysine isopeptide (Lys-Gly) (interchain with G-Cter in ubiquitin).

This sequence belongs to the WD repeat DSE1 family.

The protein resides in the bud neck. Its function is as follows. Involved in cell wall metabolism and required for the separation of the mother and daughter cells. The polypeptide is Protein DSE1 (DSE1) (Saccharomyces cerevisiae (strain ATCC 204508 / S288c) (Baker's yeast)).